A 109-amino-acid chain; its full sequence is Parvalbumin, thymic (109 aa).

Position 2 is an N-acetylalanine (A2). 2 EF-hand domains span residues 39 to 74 (KTPDQIKKVFGILDQDKSGFIEEEELQLFLKNFSSS) and 78 to 109 (LTSAETKAFLAAGDTDGDGKIGVEEFQSLVKA). 9 residues coordinate Ca(2+): D52, D54, S56, E63, D91, D93, D95, K97, and E102.

The protein belongs to the parvalbumin family.

Appears to promote immune maturation in bone marrow cells in culture. Binds two calcium ions. The protein is Parvalbumin, thymic of Gallus gallus (Chicken).